Consider the following 578-residue polypeptide: Triokinase/FMN cyclase (578 aa).

Residues 9–336 (SVEGCADDAL…IDAETTAKAW (328 aa)) enclose the DhaK domain. Dihydroxyacetone contacts are provided by residues 56–59 (GSGH), Lys-109, and Asp-114. His-221 functions as the Tele-hemiaminal-histidine intermediate in the catalytic mechanism. Positions 372-571 (KQMALVLDRI…AAAIFRAILE (200 aa)) constitute a DhaL domain. ATP is bound by residues 401–404 (DGDC), 446–447 (SS), Gly-486, and 494–495 (TM). Ser-511 and Ser-545 each carry phosphoserine. 556–558 (DPG) serves as a coordination point for ATP.

The protein belongs to the dihydroxyacetone kinase (DAK) family. Homodimer. Interacts with IFIH1 (via the CARD domains), the interaction is inhibited by viral infection. Mg(2+) is required as a cofactor. Requires Mn(2+) as cofactor. It depends on Co(2+) as a cofactor.

The catalysed reaction is dihydroxyacetone + ATP = dihydroxyacetone phosphate + ADP + H(+). It catalyses the reaction D-glyceraldehyde + ATP = D-glyceraldehyde 3-phosphate + ADP + H(+). The enzyme catalyses FAD = riboflavin cyclic-4',5'-phosphate + AMP + H(+). Its activity is regulated as follows. Each activity is inhibited by the substrate(s) of the other. Its function is as follows. Catalyzes both the phosphorylation of dihydroxyacetone and of glyceraldehyde, and the splitting of ribonucleoside diphosphate-X compounds among which FAD is the best substrate. Represses IFIH1-mediated cellular antiviral response. The polypeptide is Triokinase/FMN cyclase (Mus musculus (Mouse)).